A 311-amino-acid chain; its full sequence is Putative protease MJ0651 (311 aa).

Catalysis depends on S128, which acts as the Nucleophile. K180 functions as the Proton donor/acceptor in the catalytic mechanism.

This sequence belongs to the peptidase S49 family.

This Methanocaldococcus jannaschii (strain ATCC 43067 / DSM 2661 / JAL-1 / JCM 10045 / NBRC 100440) (Methanococcus jannaschii) protein is Putative protease MJ0651.